The sequence spans 409 residues: Arginine deiminase (409 aa).

Residue Cys-399 is the Amidino-cysteine intermediate of the active site.

It belongs to the arginine deiminase family.

Its subcellular location is the cytoplasm. It carries out the reaction L-arginine + H2O = L-citrulline + NH4(+). It functions in the pathway amino-acid degradation; L-arginine degradation via ADI pathway; carbamoyl phosphate from L-arginine: step 1/2. The protein is Arginine deiminase of Streptococcus pneumoniae (strain P1031).